Reading from the N-terminus, the 1063-residue chain is Error-prone DNA polymerase (1063 aa).

The protein belongs to the DNA polymerase type-C family. DnaE2 subfamily.

Its subcellular location is the cytoplasm. The enzyme catalyses DNA(n) + a 2'-deoxyribonucleoside 5'-triphosphate = DNA(n+1) + diphosphate. Its function is as follows. DNA polymerase involved in damage-induced mutagenesis and translesion synthesis (TLS). It is not the major replicative DNA polymerase. The sequence is that of Error-prone DNA polymerase from Burkholderia mallei (strain ATCC 23344).